The chain runs to 600 residues: Brain-enriched guanylate kinase-associated protein (600 aa).

Position 1 is an N-acetylmethionine (Met-1). At Tyr-137 the chain carries Phosphotyrosine. The interval 192-222 is disordered; the sequence is PGSLSSRMSDASARDLGYRDGVEKSGPRPPY. Ser-200 carries the post-translational modification Phosphoserine. Positions 203–217 are enriched in basic and acidic residues; sequence SARDLGYRDGVEKSG. Residues Ser-229 and Ser-246 each carry the phosphoserine modification. Thr-249 carries the post-translational modification Phosphothreonine. Ser-265 carries the post-translational modification Phosphoserine. The segment at 298–317 is disordered; that stretch reads SSYSSFSATSEEKEHAQAGT. Ser-372 carries the phosphoserine modification. Arg-380 is modified (asymmetric dimethylarginine). Phosphoserine is present on residues Ser-463, Ser-473, Ser-483, Ser-485, Ser-508, Ser-510, and Ser-514. The interval 537–590 is disordered; the sequence is GAGSSPEPEHGSRESLEPSSMEASPEMHPPTRLSPQQAFPRTGGSGLSRKDSLT. Residues 543 to 552 are compositionally biased toward basic and acidic residues; it reads EPEHGSRESL. Phosphoserine is present on residues Ser-560 and Ser-570.

As to quaternary structure, interacts with DLG4 and DLGAP1 and forms a ternary complex.

The protein resides in the cytoplasm. It localises to the membrane. In terms of biological role, may sustain the structure of the postsynaptic density (PSD). The polypeptide is Brain-enriched guanylate kinase-associated protein (Begain) (Mus musculus (Mouse)).